Consider the following 76-residue polypeptide: Small ribosomal subunit protein bS18 (76 aa).

It belongs to the bacterial ribosomal protein bS18 family. Part of the 30S ribosomal subunit. Forms a tight heterodimer with protein bS6.

Binds as a heterodimer with protein bS6 to the central domain of the 16S rRNA, where it helps stabilize the platform of the 30S subunit. In Symbiobacterium thermophilum (strain DSM 24528 / JCM 14929 / IAM 14863 / T), this protein is Small ribosomal subunit protein bS18.